Consider the following 289-residue polypeptide: MSFSLQLTRLKARLYFPQYHLPPFLGNKFRGGFGSVLLKAVCSYLKPSCNICKSVDDCLYHALYTRDRQKRGRSQPVRPIVFIPPFFGRSVSGRGELTLYINVFGDYVKYLPHIIYGLRYLGKMGLNATSKYEIVSISDAISGKEVYDGETVFVENLSSIELGKIKPREVEKEIEVDYLTPMEAKTPINLPFLIHIVRRRLILFVNEYGSGEVPEFYCEAETLESSWEKHELHHRSKRQGLRSFFGVTGRARYSISEIDDNALTLLSIGELIGGGAKASFGMGFFRIRS.

This is an uncharacterized protein from Archaeoglobus fulgidus (strain ATCC 49558 / DSM 4304 / JCM 9628 / NBRC 100126 / VC-16).